The sequence spans 222 residues: RNA chaperone ProQ (222 aa).

Positions glutamate 94 to lysine 113 are enriched in basic and acidic residues. Residues glutamate 94–glutamine 171 are disordered. A compositionally biased stretch (basic residues) spans arginine 114–asparagine 131. The segment covering proline 133–arginine 148 has biased composition (basic and acidic residues). A compositionally biased stretch (low complexity) spans asparagine 155 to lysine 164.

The protein belongs to the ProQ family.

Its subcellular location is the cytoplasm. Its function is as follows. RNA chaperone with significant RNA binding, RNA strand exchange and RNA duplexing activities. This chain is RNA chaperone ProQ, found in Alteromonas mediterranea (strain DSM 17117 / CIP 110805 / LMG 28347 / Deep ecotype).